A 247-amino-acid chain; its full sequence is Reticulon-like protein B8 (247 aa).

Residues 61–247 (SADVLLWRNK…SGKFGLKKRE (187 aa)) enclose the Reticulon domain. Helical transmembrane passes span 71-91 (KISASVLMGATAIWVLFEWIN), 92-112 (FHFLSLVCYALLLGMIAQFVW), and 166-186 (FLMAVIGLWVAAMVGSCCNFL).

The protein localises to the endoplasmic reticulum membrane. The polypeptide is Reticulon-like protein B8 (RTNLB8) (Arabidopsis thaliana (Mouse-ear cress)).